The chain runs to 310 residues: 1-aminocyclopropane-1-carboxylate oxidase 1 (310 aa).

Positions 113 to 133 (EELSKTMDEYVCQLHKFAERL) form a coiled coil. The region spanning 158-259 (PAFGTKVAKY…RLSIATFYNP (102 aa)) is the Fe2OG dioxygenase domain. Fe cation contacts are provided by His-182, Asp-184, and His-240. Arg-250 is a binding site for 2-oxoglutarate.

The protein belongs to the iron/ascorbate-dependent oxidoreductase family. The cofactor is Fe(2+).

The catalysed reaction is 1-aminocyclopropane-1-carboxylate + L-ascorbate + O2 = ethene + L-dehydroascorbate + hydrogen cyanide + CO2 + 2 H2O. It participates in alkene biosynthesis; ethylene biosynthesis via S-adenosyl-L-methionine; ethylene from S-adenosyl-L-methionine: step 2/2. Its function is as follows. Enzyme involved in the ethylene biosynthesis. May promote stem elongation by maximizing the extensibility cells, possibly by activating ethylene biosynthesis, in response to very-long-chain fatty acids (VLCFAs C20:0 to C30:0). In Arabidopsis thaliana (Mouse-ear cress), this protein is 1-aminocyclopropane-1-carboxylate oxidase 1 (ACO1).